The primary structure comprises 37 residues: Potassium channel toxin alpha-KTx 11.2 (37 aa).

3 disulfides stabilise this stretch: cysteine 8–cysteine 27, cysteine 13–cysteine 33, and cysteine 17–cysteine 35.

This sequence belongs to the short scorpion toxin superfamily. Potassium channel inhibitor family. Alpha-KTx 11 subfamily. In terms of tissue distribution, expressed by the venom gland.

It is found in the secreted. Functionally, binds and inhibits voltage-sensitive potassium channels. Inhibits the vertebrate potassium channel Kv1.1/KCNA1 with low affinity. This Parabuthus villosus (Black hairy thick-tailed scorpion) protein is Potassium channel toxin alpha-KTx 11.2.